The primary structure comprises 414 residues: F-box protein At3g47030 (414 aa).

Positions M1 to R24 are disordered. Residues I28–M77 enclose the F-box domain.

The sequence is that of F-box protein At3g47030 from Arabidopsis thaliana (Mouse-ear cress).